The primary structure comprises 122 residues: Large ribosomal subunit protein uL14 (122 aa).

The protein belongs to the universal ribosomal protein uL14 family. As to quaternary structure, part of the 50S ribosomal subunit. Forms a cluster with proteins L3 and L19. In the 70S ribosome, L14 and L19 interact and together make contacts with the 16S rRNA in bridges B5 and B8.

Its function is as follows. Binds to 23S rRNA. Forms part of two intersubunit bridges in the 70S ribosome. The chain is Large ribosomal subunit protein uL14 from Rickettsia canadensis (strain McKiel).